The chain runs to 420 residues: 3-oxoacyl-[acyl-carrier-protein] synthase 2 (420 aa).

The Ketosynthase family 3 (KS3) domain occupies 13–419; that stretch reads FPNVVVTGIA…GHNVAIAFGC (407 aa). Residues cysteine 173, histidine 314, and histidine 349 each act as for beta-ketoacyl synthase activity in the active site.

Belongs to the thiolase-like superfamily. Beta-ketoacyl-ACP synthases family.

It localises to the cytoplasm. It carries out the reaction an ultra-long-chain di-unsaturated fatty acyl-[ACP] + malonyl-[ACP] + H(+) = a 3-oxo-ultra-long-chain di-unsaturated fatty acyl-[ACP] + holo-[ACP] + CO2. The protein operates within lipid metabolism; mycolic acid biosynthesis. In terms of biological role, part of the mycobacterial fatty acid elongation system FAS-II, which is involved in mycolic acid biosynthesis. Catalyzes the elongation of long chain acyl-ACP substrates by the addition of two carbons from malonyl-ACP to an acyl acceptor. Involved in extension of the mycolate chains to full lengths and produces longer chain multiunsaturated hydrocarbons averaging 54 carbons in length. The sequence is that of 3-oxoacyl-[acyl-carrier-protein] synthase 2 (kasB) from Mycobacterium leprae (strain TN).